The sequence spans 31 residues: Cytochrome b6-f complex subunit 6 (31 aa).

A helical transmembrane segment spans residues 4–26 (LTSYFGFLLAALTITSALFIGLN).

Belongs to the PetL family. In terms of assembly, the 4 large subunits of the cytochrome b6-f complex are cytochrome b6, subunit IV (17 kDa polypeptide, PetD), cytochrome f and the Rieske protein, while the 4 small subunits are PetG, PetL, PetM and PetN. The complex functions as a dimer.

The protein resides in the plastid. The protein localises to the chloroplast thylakoid membrane. Its function is as follows. Component of the cytochrome b6-f complex, which mediates electron transfer between photosystem II (PSII) and photosystem I (PSI), cyclic electron flow around PSI, and state transitions. PetL is important for photoautotrophic growth as well as for electron transfer efficiency and stability of the cytochrome b6-f complex. This Blitum bonus-henricus (Good King Henry) protein is Cytochrome b6-f complex subunit 6.